The chain runs to 1402 residues: DNA-directed RNA polymerase subunit beta' (1402 aa).

Cys-71, Cys-73, Cys-86, and Cys-89 together coordinate Zn(2+). 3 residues coordinate Mg(2+): Asp-462, Asp-464, and Asp-466. The Zn(2+) site is built by Cys-811, Cys-885, Cys-892, and Cys-895.

This sequence belongs to the RNA polymerase beta' chain family. As to quaternary structure, the RNAP catalytic core consists of 2 alpha, 1 beta, 1 beta' and 1 omega subunit. When a sigma factor is associated with the core the holoenzyme is formed, which can initiate transcription. The cofactor is Mg(2+). It depends on Zn(2+) as a cofactor.

It carries out the reaction RNA(n) + a ribonucleoside 5'-triphosphate = RNA(n+1) + diphosphate. Its function is as follows. DNA-dependent RNA polymerase catalyzes the transcription of DNA into RNA using the four ribonucleoside triphosphates as substrates. This chain is DNA-directed RNA polymerase subunit beta', found in Bartonella henselae (strain ATCC 49882 / DSM 28221 / CCUG 30454 / Houston 1) (Rochalimaea henselae).